Consider the following 95-residue polypeptide: Co-chaperonin GroES (95 aa).

It belongs to the GroES chaperonin family. As to quaternary structure, heptamer of 7 subunits arranged in a ring. Interacts with the chaperonin GroEL.

The protein resides in the cytoplasm. Its function is as follows. Together with the chaperonin GroEL, plays an essential role in assisting protein folding. The GroEL-GroES system forms a nano-cage that allows encapsulation of the non-native substrate proteins and provides a physical environment optimized to promote and accelerate protein folding. GroES binds to the apical surface of the GroEL ring, thereby capping the opening of the GroEL channel. The sequence is that of Co-chaperonin GroES from Chlorobium limicola (strain DSM 245 / NBRC 103803 / 6330).